Here is a 95-residue protein sequence, read N- to C-terminus: Protein YY1 (95 aa).

The signal sequence occupies residues 1-26; the sequence is MAVTRTALLVVLVAGAMTMTMRGAEA. 4 disulfide bridges follow: C31-C72, C41-C61, C62-C87, and C74-C94.

The protein belongs to the A9/FIL1 family. As to expression, anther.

It is found in the secreted. The protein is Protein YY1 of Oryza sativa subsp. japonica (Rice).